We begin with the raw amino-acid sequence, 331 residues long: Ketol-acid reductoisomerase (NADP(+)) (331 aa).

In terms of domain architecture, KARI N-terminal Rossmann spans 2–182 (AKMYYDQDAD…GGTKAGAIET (181 aa)). NADP(+) is bound by residues 25–28 (FGSQ), serine 51, serine 53, and 83–86 (DEKQ). The active site involves histidine 108. An NADP(+)-binding site is contributed by glycine 134. Residues 183 to 328 (TFKEETETDL…KSLREMMPWL (146 aa)) form the KARI C-terminal knotted domain. Positions 191, 195, 227, and 231 each coordinate Mg(2+). Position 252 (serine 252) interacts with substrate.

It belongs to the ketol-acid reductoisomerase family. Requires Mg(2+) as cofactor.

The enzyme catalyses (2R)-2,3-dihydroxy-3-methylbutanoate + NADP(+) = (2S)-2-acetolactate + NADPH + H(+). The catalysed reaction is (2R,3R)-2,3-dihydroxy-3-methylpentanoate + NADP(+) = (S)-2-ethyl-2-hydroxy-3-oxobutanoate + NADPH + H(+). It participates in amino-acid biosynthesis; L-isoleucine biosynthesis; L-isoleucine from 2-oxobutanoate: step 2/4. Its pathway is amino-acid biosynthesis; L-valine biosynthesis; L-valine from pyruvate: step 2/4. In terms of biological role, involved in the biosynthesis of branched-chain amino acids (BCAA). Catalyzes an alkyl-migration followed by a ketol-acid reduction of (S)-2-acetolactate (S2AL) to yield (R)-2,3-dihydroxy-isovalerate. In the isomerase reaction, S2AL is rearranged via a Mg-dependent methyl migration to produce 3-hydroxy-3-methyl-2-ketobutyrate (HMKB). In the reductase reaction, this 2-ketoacid undergoes a metal-dependent reduction by NADPH to yield (R)-2,3-dihydroxy-isovalerate. The protein is Ketol-acid reductoisomerase (NADP(+)) of Caldanaerobacter subterraneus subsp. tengcongensis (strain DSM 15242 / JCM 11007 / NBRC 100824 / MB4) (Thermoanaerobacter tengcongensis).